The primary structure comprises 214 residues: Large ribosomal subunit protein uL3 (214 aa).

The segment at Phe129 to Arg155 is disordered.

Belongs to the universal ribosomal protein uL3 family. Part of the 50S ribosomal subunit. Forms a cluster with proteins L14 and L19.

One of the primary rRNA binding proteins, it binds directly near the 3'-end of the 23S rRNA, where it nucleates assembly of the 50S subunit. The sequence is that of Large ribosomal subunit protein uL3 from Synechococcus sp. (strain JA-3-3Ab) (Cyanobacteria bacterium Yellowstone A-Prime).